The primary structure comprises 278 residues: uncharacterized protein (278 aa).

The segment at 251–278 is disordered; it reads TLSENKKQKSSSTSPETDSDMSEFFGDN.

This is an uncharacterized protein from Aedes pseudoscutellaris reovirus (isolate France) (ApRV).